A 450-amino-acid chain; its full sequence is Methylenetetrahydrofolate--tRNA-(uracil-5-)-methyltransferase TrmFO (450 aa).

9-14 is an FAD binding site; the sequence is GGGMAG.

Belongs to the MnmG family. TrmFO subfamily. FAD serves as cofactor.

The protein localises to the cytoplasm. It catalyses the reaction uridine(54) in tRNA + (6R)-5,10-methylene-5,6,7,8-tetrahydrofolate + NADH + H(+) = 5-methyluridine(54) in tRNA + (6S)-5,6,7,8-tetrahydrofolate + NAD(+). The catalysed reaction is uridine(54) in tRNA + (6R)-5,10-methylene-5,6,7,8-tetrahydrofolate + NADPH + H(+) = 5-methyluridine(54) in tRNA + (6S)-5,6,7,8-tetrahydrofolate + NADP(+). Catalyzes the folate-dependent formation of 5-methyl-uridine at position 54 (M-5-U54) in all tRNAs. This is Methylenetetrahydrofolate--tRNA-(uracil-5-)-methyltransferase TrmFO from Roseobacter denitrificans (strain ATCC 33942 / OCh 114) (Erythrobacter sp. (strain OCh 114)).